The primary structure comprises 113 residues: Large ribosomal subunit protein bL17 (113 aa).

It belongs to the bacterial ribosomal protein bL17 family. Part of the 50S ribosomal subunit. Contacts protein L32.

This is Large ribosomal subunit protein bL17 from Clostridium botulinum (strain Loch Maree / Type A3).